Consider the following 128-residue polypeptide: uncharacterized protein (128 aa).

This is an uncharacterized protein from Methanocaldococcus jannaschii (strain ATCC 43067 / DSM 2661 / JAL-1 / JCM 10045 / NBRC 100440) (Methanococcus jannaschii).